We begin with the raw amino-acid sequence, 72 residues long: Crustacean hyperglycemic hormone A (72 aa).

Gln-1 is modified (pyrrolidone carboxylic acid). Position 3 is a D-phenylalanine; in form CHHA-II (Phe-3). Disulfide bonds link Cys-7–Cys-43, Cys-23–Cys-39, and Cys-26–Cys-52. Valine amide is present on Val-72.

In terms of processing, stereoinversion of L-Phe (in CHHA-I) to D-Phe (in CHHA-II).

It is found in the secreted. Its function is as follows. Hormone found in the sinus gland of isopods and decapods which controls the blood sugar level. Has a secretagogue action over the amylase released from the midgut gland. May act as a stress hormone and may be involved in the control of molting and reproduction. The sequence is that of Crustacean hyperglycemic hormone A from Cherax destructor (Common yabby crayfish).